The primary structure comprises 673 residues: Potassium voltage-gated channel subfamily KQT member 1 (673 aa).

Disordered stretches follow at residues 1 to 28 (MAAA…RGSA) and 61 to 80 (GPSS…LGPR). Over 1 to 118 (MAAATSPPRA…YNFLERPTGW (118 aa)) the chain is Cytoplasmic. Ser-27 is modified (phosphoserine). Residues 66–75 (AAPAASPAAA) show a composition bias toward low complexity. Residues 119–140 (KCFVYHFAVFLIVLVCLIFSVL) traverse the membrane as a helical segment. Over 141 to 151 (STIEQYVALAT) the chain is Extracellular. The helical transmembrane segment at 152–174 (GTLFWMEIVLVVFFGTEYAVRLW) threads the bilayer. Topologically, residues 175-190 (SAGCRSKYVGIWGRLR) are cytoplasmic. The helical transmembrane segment at 191–216 (FARKPISIIDLIVVVASMVVLCVGSK) threads the bilayer. At 217–224 (GQVFATSA) the chain is on the extracellular side. Residues 225-240 (IRGIRFLQILRMLHVD) traverse the membrane as a helical; Voltage-sensor segment. The interaction with KCNE3 stretch occupies residues 236 to 244 (MLHVDRQGG). At 241–258 (RQGGTWRLLGSVVFIHRQ) the chain is on the cytoplasmic side. Position 242 (Gln-242) interacts with a 1,2-diacyl-sn-glycero-3-phospho-(1D-myo-inositol-4,5-bisphosphate). A helical transmembrane segment spans residues 259–281 (ELITTLYIGFLGLIFSSYFVYLA). Over 282–297 (EKDAVNESGQVEFGSY) the chain is Extracellular. N-linked (GlcNAc...) asparagine glycosylation is present at Asn-287. Residues 298 to 318 (ADALWWGVVTVTTIGYGDKVP) constitute an intramembrane region (pore-forming). Residues 319–320 (QT) lie on the Extracellular side of the membrane. A helical membrane pass occupies residues 321–346 (WVGKTIASCFSVFAISFFALPAGILG). Over 347-673 (SGFALKVQQK…VPGRGPEEGS (327 aa)) the chain is Cytoplasmic. The tract at residues 368–380 (AAASLIQTAWRCY) is interaction with CALM. 2 positions are modified to phosphoserine: Ser-405 and Ser-407. Positions 514 to 528 (KVIRRMQYFVAKKKF) are interaction with CALM; calcium-dependent. The interval 534 to 571 (PYDVRDVIEQYSQGHLNLMVRIKELQRRLDQSIGRPAL) is interaction with KCNE1 C-terminus. An interaction with AKAP9 region spans residues 587–615 (IGARLNRVEDKVTQLDQRLELITDMLQQL). The segment at 588 to 619 (GARLNRVEDKVTQLDQRLELITDMLQQLLSLH) is C-terminal assembly domain (tetramerization). Residues 619-673 (HRGGTPGSRAPGGGGAQVAQPCSGGSINPELFLPSNALPTYEQLTVPGRGPEEGS) are disordered. Residues 622–634 (GTPGSRAPGGGGA) are compositionally biased toward gly residues.

This sequence belongs to the potassium channel family. KQT (TC 1.A.1.15) subfamily. Kv7.1/KCNQ1 sub-subfamily. Tetramer. Heterotetramer with KCNE1; targets to the membrane raft. Interacts (via C-terminus) with CALM; forms a heterooctameric structure (with 4:4 KCNQ1:CALM stoichiometry) in a calcium-independent manner. Interacts with AKAP9; targets protein kinase A (PKA) catalytic and regulatory subunits and protein phosphatase 1 (PP1) to the KCNQ1-KCNE1 complex, allowing PKA-mediated phosphorylation and increase of delayed rectifier potassium channel activity. Interacts with KCNE2; form a heterooligomer complex that targets to the membrane raft and leading to currents with an apparently instantaneous activation, a rapid deactivation process and a linear current-voltage relationship and decreases the amplitude of the outward current. Interacts with AP2M1; mediates estrogen-induced internalization via clathrin-coated vesicles. Interacts with NEDD4L; promotes internalization and decreases I(Ks) currents. Interacts with USP2; counteracts the NEDD4L-specific down-regulation of I(Ks) and restore plasma membrane localization. Heterotetramer with KCNQ5; has a voltage-gated potassium channel activity. Interacts with KCNE3; four KCNE3 molecules are bound to one KCNQ1 tetramer (4:4 KCNQ1:KCNE3 stoichiometry); alters membrane raft localization; affects KCNQ1 structure and gating properties. Interacts with KCNE4; impairs KCNQ1 localization in lipid rafts and inhibits voltage-gated potassium channel activity. Interacts with KCNE5; impairs KCNQ1 localization in lipid rafts and only conducts current upon strong and continued depolarization. Interacts with SLC5A3; forms coregulatory channel-transporter complexes that modulate Na(+)-coupled myo-inositol influx through the transporter. Ubiquitinated by NEDD4L; promotes internalization. The ubiquitinylated form is internalized through a clathrin-mediated endocytosis by interacting with AP2M1 and is recycled back to the cell membrane via RAB4A and RAB11A. Post-translationally, deubiquitinated by USP2; counteracts the NEDD4L-specific down-regulation of I(Ks) and restores the membrane localization.

Its subcellular location is the cell membrane. The protein localises to the cytoplasmic vesicle membrane. It localises to the early endosome. It is found in the membrane raft. The protein resides in the endoplasmic reticulum. Its subcellular location is the basolateral cell membrane. The protein localises to the apical cell membrane. It carries out the reaction K(+)(in) = K(+)(out). With respect to regulation, PIP2 molecule is essential to activate KCNQ channels by inducing the coupling of the voltage-sensing domain (VSD) and the pore-forming domain (PD). Upon channel activation, PIP2 disrupts the VSD-calmodulin/CALM interactions, causing the release of CALM from the VSD which triggers the opening of the gate. Calcium potentiates KCNQ1 channel current through calcium-bound CALM. Calcium-bound CALM competes with PIP2 to stabilize the channel open state. In terms of biological role, pore-forming subunit of the voltage-gated potassium (Kv) channel involved in the regulation of cardiomyocyte excitability and important in normal development and functions of myocardium, inner ear, stomach and colon. Associates with KCNE beta subunits that modulates current kinetics. Induces a voltage-dependent by rapidly activating and slowly deactivating potassium-selective outward current. Also promotes a delayed voltage activated potassium current showing outward rectification characteristic. During beta-adrenergic receptor stimulation participates in cardiac repolarization by associating with KCNE1 to form the I(Ks) cardiac potassium current that increases the amplitude and slows down the activation kinetics of outward potassium current I(Ks). Muscarinic agonist oxotremorine-M strongly suppresses KCNQ1/KCNE1 current. When associated with KCNE3, forms the potassium channel that is important for cyclic AMP-stimulated intestinal secretion of chloride ions. This interaction with KCNE3 is reduced by 17beta-estradiol, resulting in the reduction of currents. During conditions of increased substrate load, maintains the driving force for proximal tubular and intestinal sodium ions absorption, gastric acid secretion, and cAMP-induced jejunal chloride ions secretion. Allows the provision of potassium ions to the luminal membrane of the secretory canaliculus in the resting state as well as during stimulated acid secretion. When associated with KCNE2, forms a heterooligomer complex leading to currents with an apparently instantaneous activation, a rapid deactivation process and a linear current-voltage relationship and decreases the amplitude of the outward current. When associated with KCNE4, inhibits voltage-gated potassium channel activity. When associated with KCNE5, this complex only conducts current upon strong and continued depolarization. Also forms a heterotetramer with KCNQ5 that has a voltage-gated potassium channel activity. Binds with phosphatidylinositol 4,5-bisphosphate. KCNQ1-KCNE2 channel associates with Na(+)-coupled myo-inositol symporter in the apical membrane of choroid plexus epithelium and regulates the myo-inositol gradient between blood and cerebrospinal fluid with an impact on neuron excitability. This is Potassium voltage-gated channel subfamily KQT member 1 from Sus scrofa (Pig).